Reading from the N-terminus, the 604-residue chain is Serine protease 56 (604 aa).

The N-terminal stretch at 1–22 (MPLAMLLLLLLLLSPDSQTAHG) is a signal peptide. Residues 70–94 (CQGPGRPRPQAPLLQDPPEPVQCGE) form a disordered region. The span at 75–89 (RPRPQAPLLQDPPEP) shows a compositional bias: pro residues. N101 carries N-linked (GlcNAc...) asparagine glycosylation. The Peptidase S1 domain occupies 109 to 341 (IVGGSTAPSG…FKDWLQEQMS (233 aa)). Cysteines 134 and 150 form a disulfide. Residues H149 and D195 each act as charge relay system in the active site. 3 disulfides stabilise this stretch: C229-C296, C260-C275, and C286-C317. S290 acts as the Charge relay system in catalysis. Disordered stretches follow at residues 424–452 (RPGL…PREQ) and 578–604 (PQAP…PPVP).

This sequence belongs to the peptidase S1 family. Expressed in the eye: present in the retina and in the optic nerve.

It is found in the endoplasmic reticulum membrane. Functionally, serine protease required during eye development. This is Serine protease 56 (Prss56) from Mus musculus (Mouse).